Reading from the N-terminus, the 118-residue chain is Basic phospholipase A2 1 (118 aa).

7 cysteine pairs are disulfide-bonded: Cys-11–Cys-72, Cys-26–Cys-117, Cys-28–Cys-44, Cys-43–Cys-98, Cys-50–Cys-91, Cys-60–Cys-84, and Cys-78–Cys-89. Residues Tyr-27, Gly-29, and Gly-31 each coordinate Ca(2+). The active site involves His-47. Asp-48 contacts Ca(2+). Asp-92 is an active-site residue.

It belongs to the phospholipase A2 family. Group I subfamily. D49 sub-subfamily. Ca(2+) is required as a cofactor. Expressed by the venom gland.

The protein resides in the secreted. It carries out the reaction a 1,2-diacyl-sn-glycero-3-phosphocholine + H2O = a 1-acyl-sn-glycero-3-phosphocholine + a fatty acid + H(+). Functionally, PLA2 catalyzes the calcium-dependent hydrolysis of the 2-acyl groups in 3-sn-phosphoglycerides. In Naja melanoleuca (Forest cobra), this protein is Basic phospholipase A2 1.